The chain runs to 400 residues: Nicotinate phosphoribosyltransferase (400 aa).

Position 220 is a phosphohistidine; by autocatalysis (His220).

Belongs to the NAPRTase family. Transiently phosphorylated on a His residue during the reaction cycle. Phosphorylation strongly increases the affinity for substrates and increases the rate of nicotinate D-ribonucleotide production. Dephosphorylation regenerates the low-affinity form of the enzyme, leading to product release.

It catalyses the reaction nicotinate + 5-phospho-alpha-D-ribose 1-diphosphate + ATP + H2O = nicotinate beta-D-ribonucleotide + ADP + phosphate + diphosphate. The protein operates within cofactor biosynthesis; NAD(+) biosynthesis; nicotinate D-ribonucleotide from nicotinate: step 1/1. Its function is as follows. Catalyzes the synthesis of beta-nicotinate D-ribonucleotide from nicotinate and 5-phospho-D-ribose 1-phosphate at the expense of ATP. In Salmonella typhimurium (strain LT2 / SGSC1412 / ATCC 700720), this protein is Nicotinate phosphoribosyltransferase.